Consider the following 368-residue polypeptide: Glutaminyl-peptide cyclotransferase (368 aa).

Positions 1–33 (MARERRDSKAATFFCLAWALCLALPGFPQHVSG) are cleaved as a signal peptide. The N-linked (GlcNAc...) asparagine glycan is linked to N53. Residues C143 and C169 are joined by a disulfide bond. A Zn(2+)-binding site is contributed by D164. E207 (proton acceptor) is an active-site residue. E208 provides a ligand contact to Zn(2+). The active-site Proton acceptor is D254. The N-linked (GlcNAc...) asparagine glycan is linked to N292. H336 lines the Zn(2+) pocket. N352 is a glycosylation site (N-linked (GlcNAc...) asparagine).

The protein belongs to the glutaminyl-peptide cyclotransferase family. As to expression, expressed by the venom gland.

It is found in the secreted. It catalyses the reaction N-terminal L-glutaminyl-[peptide] = N-terminal 5-oxo-L-prolyl-[peptide] + NH4(+). Functionally, responsible for the biosynthesis of pyroglutamyl peptides. Has a bias against acidic and tryptophan residues adjacent to the N-terminal glutaminyl residue and a lack of importance of chain length after the second residue. Also catalyzes N-terminal pyroglutamate formation. This chain is Glutaminyl-peptide cyclotransferase (QPCT), found in Gloydius blomhoffii (Mamushi).